A 420-amino-acid polypeptide reads, in one-letter code: MPGGCSRGPAAGDGRLRLARLALVLLGWVSSSSSTSSASSSSSSAPFLASAASAQPPLPDQCPALCECSEAARTVKCVNRNLTEVPTDLPLYVRNLFLTGNQLAVLPAGAFARRPPLAELAALNLSGSRLDEVRGGAFEHLPSLRQLDLSHNPLAYLSPFAFSGSNASISAPSPLVELILNHIVPPDDKRQNRSFEGMVAAALVAGRALQGLHLLELASNHFLYLPRDVLAQLPSLRYLDLSNNSLVSLTYVSFRNLTHLESLHLEDNALKVLHNGTLAELQGLPHVRVFLDNNPWVCDCHMADMVTWLKQTGVVQGKDRLTCAFPEKMRNRVLLELNSADLDCDPILPPSLQTSYVFLGIVLALIGAIFLLVLYLNRKGIKKWMHNIRDACRDHMEGYHYRYEINADPRLTNLSSNSDV.

A signal peptide spans 1–34; it reads MPGGCSRGPAAGDGRLRLARLALVLLGWVSSSSS. At 35–355 the chain is on the extracellular side; it reads TSSASSSSSS…PILPPSLQTS (321 aa). The 39-residue stretch at 53–91 folds into the LRRNT domain; sequence SAQPPLPDQCPALCECSEAARTVKCVNRNLTEVPTDLPL. Disulfide bonds link C62/C68 and C66/C77. N81 carries an N-linked (GlcNAc...) asparagine glycan. LRR repeat units follow at residues 92–113, 116–139, 141–163, 172–204, 209–232, 233–255, and 256–275; these read YVRN…AFAR, PLAE…GAFE, LPSL…FAFS, PSPL…AALV, LQGL…VLAQ, LPSL…VSFR, and NLTH…VLHN. N124 is a glycosylation site (N-linked (GlcNAc...) asparagine). The N-linked (GlcNAc...) asparagine glycan is linked to N275. Residues 283-346 form the LRRCT domain; the sequence is GLPHVRVFLD…LNSADLDCDP (64 aa). 2 cysteine pairs are disulfide-bonded: C298-C323 and C300-C344. Residues 356–376 form a helical membrane-spanning segment; the sequence is YVFLGIVLALIGAIFLLVLYL. Residues 377-420 lie on the Cytoplasmic side of the membrane; sequence NRKGIKKWMHNIRDACRDHMEGYHYRYEINADPRLTNLSSNSDV. The residue at position 418 (S418) is a Phosphoserine.

Highly glycosylated.

It localises to the cell membrane. May function as an inhibitor of Wnt/beta-catenin signaling by indirectly interacting with LRP6 and blocking Wnt3a-dependent LRP6 internalization. In Macaca fascicularis (Crab-eating macaque), this protein is Trophoblast glycoprotein (TPBG).